We begin with the raw amino-acid sequence, 376 residues long: 23S rRNA (uracil(747)-C(5))-methyltransferase RlmC (376 aa).

Residues Cys-3, Cys-11, Cys-14, and Cys-87 each coordinate [4Fe-4S] cluster. 4 residues coordinate S-adenosyl-L-methionine: Gln-212, Phe-241, Glu-262, and Asn-307. The active-site Nucleophile is the Cys-334.

This sequence belongs to the class I-like SAM-binding methyltransferase superfamily. RNA M5U methyltransferase family. RlmC subfamily.

It carries out the reaction uridine(747) in 23S rRNA + S-adenosyl-L-methionine = 5-methyluridine(747) in 23S rRNA + S-adenosyl-L-homocysteine + H(+). Catalyzes the formation of 5-methyl-uridine at position 747 (m5U747) in 23S rRNA. This Yersinia pseudotuberculosis serotype O:1b (strain IP 31758) protein is 23S rRNA (uracil(747)-C(5))-methyltransferase RlmC.